The primary structure comprises 273 residues: 29 kDa ribonucleoprotein A, chloroplastic (273 aa).

Residues 1–58 (MASSASSLHFLSLTPQTLPLPKPTSQTTSLSFFSLPPSSLNLSLSSSSSCFSSRFVRK) constitute a chloroplast transit peptide. Positions 87–165 (LKIFVGNLPF…RALRVNSGPP (79 aa)) constitute an RRM 1 domain. Residues 156-181 (RALRVNSGPPPEKRENSSFRGGSRGG) are disordered. Positions 166–187 (PEKRENSSFRGGSRGGGSFDSS) are linker (Gly-rich). Residues 188 to 266 (NRVYVGNLAW…RAIRVSPAEA (79 aa)) enclose the RRM 2 domain.

It localises to the plastid. It is found in the chloroplast. In terms of biological role, could be involved in splicing and/or processing of chloroplast RNA's. The sequence is that of 29 kDa ribonucleoprotein A, chloroplastic from Nicotiana sylvestris (Wood tobacco).